A 380-amino-acid chain; its full sequence is Cytochrome b (380 aa).

4 helical membrane-spanning segments follow: residues 33–53 (FGSLLGLCLAIQLLTGLFLAM), 77–98 (WLIRNMHANGASFFFICIYLHI), 113–133 (WNVGVVLLLLVMMTAFVGYVL), and 178–198 (FFAFHFLLPFVIAAATLLHLL). Positions 83 and 97 each coordinate heme b. Residues histidine 182 and histidine 196 each coordinate heme b. An a ubiquinone-binding site is contributed by histidine 201. A run of 4 helical transmembrane segments spans residues 226-246 (YKDLLGFIVLFLALASLALFS), 288-308 (LGGVLALLASILILMLVPILH), 320-340 (FSQIIFWTLVADVAILTWIGG), and 347-367 (YIIIGQIASALYFLIFLVFFP).

The protein belongs to the cytochrome b family. As to quaternary structure, the cytochrome bc1 complex contains 3 respiratory subunits (MT-CYB, CYC1 and UQCRFS1), 2 core proteins (UQCRC1 and UQCRC2) and probably 6 low-molecular weight proteins. Requires heme b as cofactor.

It is found in the mitochondrion inner membrane. In terms of biological role, component of the ubiquinol-cytochrome c reductase complex (complex III or cytochrome b-c1 complex) that is part of the mitochondrial respiratory chain. The b-c1 complex mediates electron transfer from ubiquinol to cytochrome c. Contributes to the generation of a proton gradient across the mitochondrial membrane that is then used for ATP synthesis. This Apogon semilineatus (Half-lined cardinal) protein is Cytochrome b (mt-cyb).